The following is a 132-amino-acid chain: Small ribosomal subunit protein uS8 (132 aa).

Belongs to the universal ribosomal protein uS8 family. In terms of assembly, part of the 30S ribosomal subunit. Contacts proteins S5 and S12.

Its function is as follows. One of the primary rRNA binding proteins, it binds directly to 16S rRNA central domain where it helps coordinate assembly of the platform of the 30S subunit. The polypeptide is Small ribosomal subunit protein uS8 (Staphylococcus carnosus (strain TM300)).